The chain runs to 695 residues: Polyribonucleotide nucleotidyltransferase (695 aa).

Mg(2+) contacts are provided by D486 and D492. One can recognise a KH domain in the interval P553–V612. Positions G622–K690 constitute an S1 motif domain.

The protein belongs to the polyribonucleotide nucleotidyltransferase family. Component of the RNA degradosome, which is a multiprotein complex involved in RNA processing and mRNA degradation. The cofactor is Mg(2+).

The protein localises to the cytoplasm. It catalyses the reaction RNA(n+1) + phosphate = RNA(n) + a ribonucleoside 5'-diphosphate. Involved in mRNA degradation. Catalyzes the phosphorolysis of single-stranded polyribonucleotides processively in the 3'- to 5'-direction. The protein is Polyribonucleotide nucleotidyltransferase of Nitrosococcus oceani (strain ATCC 19707 / BCRC 17464 / JCM 30415 / NCIMB 11848 / C-107).